We begin with the raw amino-acid sequence, 460 residues long: 3-ketoacyl-CoA synthase 7 (460 aa).

Residues 21–41 (FHQFLVASACVLIAVFGYYFF) form a helical membrane-spanning segment. Residues 38-328 (YYFFKPRCII…YIISFIQRKW (291 aa)) form the FAE domain. Active-site residues include C183, H262, H345, H349, and N382.

This sequence belongs to the thiolase-like superfamily. Chalcone/stilbene synthases family. Expressed in flowers.

The protein resides in the membrane. The catalysed reaction is a very-long-chain acyl-CoA + malonyl-CoA + H(+) = a very-long-chain 3-oxoacyl-CoA + CO2 + CoA. The protein operates within lipid metabolism; fatty acid biosynthesis. The protein is 3-ketoacyl-CoA synthase 7 of Arabidopsis thaliana (Mouse-ear cress).